Consider the following 88-residue polypeptide: Small ribosomal subunit protein uS15 (88 aa).

Belongs to the universal ribosomal protein uS15 family. Part of the 30S ribosomal subunit. Forms a bridge to the 50S subunit in the 70S ribosome, contacting the 23S rRNA.

Its function is as follows. One of the primary rRNA binding proteins, it binds directly to 16S rRNA where it helps nucleate assembly of the platform of the 30S subunit by binding and bridging several RNA helices of the 16S rRNA. Forms an intersubunit bridge (bridge B4) with the 23S rRNA of the 50S subunit in the ribosome. The chain is Small ribosomal subunit protein uS15 from Metamycoplasma arthritidis (strain 158L3-1) (Mycoplasma arthritidis).